A 130-amino-acid chain; its full sequence is Transcription antitermination protein NusB (130 aa).

This sequence belongs to the NusB family.

Its function is as follows. Involved in transcription antitermination. Required for transcription of ribosomal RNA (rRNA) genes. Binds specifically to the boxA antiterminator sequence of the ribosomal RNA (rrn) operons. This is Transcription antitermination protein NusB from Geobacillus kaustophilus (strain HTA426).